Consider the following 330-residue polypeptide: G-protein coupled bile acid receptor 1 (330 aa).

Residues 1–19 (MTPNSTGEVPGPIPRGALE) are Extracellular-facing. An N-linked (GlcNAc...) asparagine glycan is attached at N4. A helical transmembrane segment spans residues 20–40 (LSLALASLIIAANLLLALGIA). Residues 41 to 50 (CDRRLRSPPA) are Cytoplasmic-facing. Residues 51 to 71 (GCFFLSLLLAGLLTGLALPTL) traverse the membrane as a helical segment. The Extracellular segment spans residues 72-85 (PGLWRQSHRGYWSC). An intrachain disulfide couples C85 to C155. Residues 86 to 106 (LLVYLAPNFSFLSLLANLLLV) traverse the membrane as a helical segment. Residues 107-125 (HGERYVAVLRPLQPPGSIR) are Cytoplasmic-facing. A helical membrane pass occupies residues 126–146 (LALLLTWTGPLLFASLPALGW). The Extracellular portion of the chain corresponds to 147 to 169 (NHWGPEANCSSQTIFPAPYLYLE). Residue N154 is glycosylated (N-linked (GlcNAc...) asparagine). The chain crosses the membrane as a helical span at residues 170-190 (VYGLLLPAVGAAALLSAHVLL). Over 191-230 (AAHRQLQDIRRLERAVCRDAPSALARALTWRQARAQAGAT) the chain is Cytoplasmic. Residues 231 to 251 (LLFGLCWGPYVATLFLSVLAY) traverse the membrane as a helical segment. Residues 252–261 (EQRPPLGPGT) lie on the Extracellular side of the membrane. The chain crosses the membrane as a helical span at residues 262-282 (LLSLLSLGSASAAAVPVAMGL). The Cytoplasmic portion of the chain corresponds to 283–330 (GDHRYTAPWRAAARRWLRGLRGRGSQASPGPSTAYHTSSQSSVDVDLN). A disordered region spans residues 304–330 (GRGSQASPGPSTAYHTSSQSSVDVDLN). Positions 307-330 (SQASPGPSTAYHTSSQSSVDVDLN) are enriched in polar residues.

The protein belongs to the G-protein coupled receptor 1 family. In terms of tissue distribution, expressed at high level in spleen. Expressed at lower level in thymus, heart, lung, liver, kidney, ileum, blood and adherent alveolar macrophage cells.

Its subcellular location is the cell membrane. In terms of biological role, receptor for bile acid. Bile-acid binding induces its internalization, activation of extracellular signal-regulated kinase and intracellular cAMP production. May be involved in the suppression of macrophage functions by bile acids. Involved in bile acid promoted GLP1R secretion. In Oryctolagus cuniculus (Rabbit), this protein is G-protein coupled bile acid receptor 1 (GPBAR1).